The chain runs to 487 residues: MGETVPRRRREDEKSIQSDEPKTTSLQKEVGLISGICIIVGTIIGSGIFISPKSVLSNTQAVGPCLIIWAACGVLGTLGALCFAELGTMITKSGGEYPYLMEAFGPIPAYLFSWSSLLVMKPSSFAIICLSFSEYVATPFYSGCEPPKVVVKCLAAAAIMLITTVNSLSVRLGSYVQNFFTAAKLVIVAIIIISGLVLLAQGNTKNFENSFEGAEVSVGAISLALYNGLWAYDGWNQLNYITEELRNPFRNLPLAIIFGIPLVTVCYILINISYFTVMTPTELLQSQAVAVTFGDRVLYPASWIVPVFVAFSTIGAANGTCFTAGRLVYVAGREGHMLKVLSYISVRRLTPAPAIIFYGIVATIYIIPGDINSLVNYFSFATWLFYGLTILGLIVMRFTRKELERPIKVPIFIPILVTFIAAFLVLAPVITNPAWEYLYCVLFILSGLVFYFLFVYYKFEWAQKISKPITMHLQMLMEVVPPEPDPK.

A disordered region spans residues 1–22 (MGETVPRRRREDEKSIQSDEPK). The Cytoplasmic portion of the chain corresponds to 1 to 31 (MGETVPRRRREDEKSIQSDEPKTTSLQKEVG). Residue Ser18 is modified to Phosphoserine. A helical membrane pass occupies residues 32–55 (LISGICIIVGTIIGSGIFISPKSV). 43-47 (IIGSG) serves as a coordination point for L-arginine. The Extracellular segment spans residues 56–62 (LSNTQAV). The chain crosses the membrane as a helical span at residues 63–84 (GPCLIIWAACGVLGTLGALCFA). The Cytoplasmic portion of the chain corresponds to 85–110 (ELGTMITKSGGEYPYLMEAFGPIPAY). The helical transmembrane segment at 111-137 (LFSWSSLLVMKPSSFAIICLSFSEYVA) threads the bilayer. The Extracellular segment spans residues 138 to 147 (TPFYSGCEPP). Helical transmembrane passes span 148–169 (KVVVKCLAAAAIMLITTVNSLS) and 170–193 (VRLGSYVQNFFTAAKLVIVAIIII). The Extracellular segment spans residues 194–217 (SGLVLLAQGNTKNFENSFEGAEVS). The helical transmembrane segment at 218 to 238 (VGAISLALYNGLWAYDGWNQL) threads the bilayer. Asp233 lines the L-arginine pocket. The Cytoplasmic segment spans residues 239 to 251 (NYITEELRNPFRN). The helical transmembrane segment at 252–274 (LPLAIIFGIPLVTVCYILINISY) threads the bilayer. At 275–302 (FTVMTPTELLQSQAVAVTFGDRVLYPAS) the chain is on the extracellular side. Residues 303-325 (WIVPVFVAFSTIGAANGTCFTAG) form a helical membrane-spanning segment. The Cytoplasmic segment spans residues 326–351 (RLVYVAGREGHMLKVLSYISVRRLTP). Helical transmembrane passes span 352-370 (APAIIFYGIVATIYIIPGD) and 371-391 (INSLVNYFSFATWLFYGLTIL). The Cytoplasmic portion of the chain corresponds to 392-410 (GLIVMRFTRKELERPIKVP). Residues 411-431 (IFIPILVTFIAAFLVLAPVIT) traverse the membrane as a helical segment. At 432-434 (NPA) the chain is on the extracellular side. The chain crosses the membrane as a helical span at residues 435-450 (WEYLYCVLFILSGLVF). Topologically, residues 451 to 487 (YFLFVYYKFEWAQKISKPITMHLQMLMEVVPPEPDPK) are cytoplasmic.

It belongs to the amino acid-polyamine-organocation (APC) superfamily. In terms of assembly, disulfide-linked heterodimer composed of the catalytic light chain subunit SLC7A9 and the heavy chain subunit. The heterodimer is the minimal functional unit. Assembles in heterotetramers (dimers of heterodimers) and higher order oligomers. Interacts with CAV1. Kidney and small intestine.

The protein resides in the apical cell membrane. It carries out the reaction L-leucine(out) + L-arginine(in) = L-leucine(in) + L-arginine(out). The enzyme catalyses L-histidine(out) + L-arginine(in) = L-histidine(in) + L-arginine(out). The catalysed reaction is L-arginine(in) + L-phenylalanine(out) = L-arginine(out) + L-phenylalanine(in). It catalyses the reaction L-cysteine(out) + L-arginine(in) = L-cysteine(in) + L-arginine(out). It carries out the reaction L-cystine(out) + L-arginine(in) = L-cystine(in) + L-arginine(out). The enzyme catalyses L-lysine(out) + L-arginine(in) = L-lysine(in) + L-arginine(out). Mediates the electrogenic exchange between cationic amino acids and neutral amino acids, with a stoichiometry of 1:1. Has system b(0,+)-like activity with high affinity for extracellular cationic amino acids and L-cystine and lower affinity for intracellular neutral amino acids. Substrate exchange is driven by high concentration of intracellular neutral amino acids and the intracellular reduction of L-cystine to L-cysteine. Required for reabsorption of L-cystine and dibasic amino acids across the brush border membrane in renal proximal tubules. This chain is b(0,+)-type amino acid transporter 1, found in Oryctolagus cuniculus (Rabbit).